Here is a 400-residue protein sequence, read N- to C-terminus: Opsin-3 (400 aa).

Topologically, residues 1-38 are extracellular; that stretch reads MYSGNRSGDQGYWEDGAGAEGAAPAGTRSPAPLFSPTA. Asparagine 5 carries N-linked (GlcNAc...) asparagine glycosylation. A helical transmembrane segment spans residues 39–63; sequence YERLALLLGCLALLGVGGNLLVLLL. Topologically, residues 64–75 are cytoplasmic; the sequence is YSKFPRLRTPTH. A helical transmembrane segment spans residues 76–100; it reads LFLVNLSLGDLLVSLFGVTFTFASC. Residues 101 to 115 lie on the Extracellular side of the membrane; that stretch reads LRNGWVWDAVGCAWD. Cysteine 112 and cysteine 186 form a disulfide bridge. Residues 116 to 135 form a helical membrane-spanning segment; sequence GFSGSLFGFVSITTLTVLAY. Residues 136–151 are Cytoplasmic-facing; that stretch reads ERYIRVVHARVINFSW. Residues 152 to 175 traverse the membrane as a helical segment; that stretch reads AWRAITYIWLYSLAWAGAPLLGWN. The Extracellular portion of the chain corresponds to 176 to 199; it reads RYILDIHGLGCTVDWRSKDANDSS. An N-linked (GlcNAc...) asparagine glycan is attached at asparagine 196. Residues 200–227 traverse the membrane as a helical segment; that stretch reads FVLFLFLGCLVVPVGIIAHCYGHILYSV. The Cytoplasmic segment spans residues 228–253; sequence RMLRCVEDLQTIQVIKMLRYEKKVAK. The helical transmembrane segment at 254-277 threads the bilayer; the sequence is MCFLMAFVFLTCWMPYIVTRFLVV. Residues 278 to 285 lie on the Extracellular side of the membrane; it reads NGYGHLVT. A helical transmembrane segment spans residues 286 to 310; the sequence is PTVSIVSYLFAKSSTVYNPVIYIFM. At lysine 297 the chain carries N6-(retinylidene)lysine. Residues 311–400 lie on the Cytoplasmic side of the membrane; that stretch reads NRKFRRSLLQ…KVDVIQVRPL (90 aa). Cysteine 323 carries S-palmitoyl cysteine lipidation.

The protein belongs to the G-protein coupled receptor 1 family. Opsin subfamily. As to quaternary structure, interacts with MC1R; the interaction results in a decrease in MC1R-mediated cAMP signaling and ultimately a decrease in melanin production in melanocytes. Expressed in the eye (at protein level). Expressed in tracheal airway smooth muscle. Expressed in brown adipocyte tissue; expression becomes more abundant during differentiation. Strongly expressed in brain. Highly expressed in the preoptic area and paraventricular nucleus of the hypothalamus. Shows highly patterned expression in other regions of the brain, being enriched in selected regions of the cerebral cortex, cerebellar Purkinje cells, a subset of striatal neurons, selected thalamic nuclei, and a subset of interneurons in the ventral horn of the spinal cord.

The protein resides in the cell membrane. Its subcellular location is the cytoplasm. G-protein coupled receptor which selectively activates G proteins via ultraviolet A (UVA) light-mediated activation in the skin. Binds both 11-cis retinal and all-trans retinal. Regulates melanogenesis in melanocytes via inhibition of alpha-MSH-induced MC1R-mediated cAMP signaling, modulation of calcium flux, regulation of CAMK2 phosphorylation, and subsequently phosphorylation of CREB, p38, ERK and MITF in response to blue light. Plays a role in melanocyte survival through regulation of intracellular calcium levels and subsequent BCL2/RAF1 signaling. Additionally regulates apoptosis via cytochrome c release and subsequent activation of the caspase cascade. Required for TYR and DCT blue light-induced complex formation in melanocytes. Involved in keratinocyte differentiation in response to blue-light. Required for the UVA-mediated induction of calcium and mitogen-activated protein kinase signaling resulting in the expression of MMP1, MMP2, MMP3, MMP9 and TIMP1 in dermal fibroblasts. Plays a role in light-mediated glucose uptake, mitochondrial respiration and fatty acid metabolism in brown adipocyte tissues. May be involved in photorelaxation of airway smooth muscle cells, via blue-light dependent GPCR signaling pathways. This chain is Opsin-3 (Opn3), found in Mus musculus (Mouse).